A 212-amino-acid polypeptide reads, in one-letter code: Ribonuclease HII (212 aa).

The RNase H type-2 domain maps to 2 to 206; the sequence is TPLVGVDEAG…CERIRAEAEQ (205 aa). A divalent metal cation-binding residues include Asp-8, Glu-9, and Asp-101.

The protein belongs to the RNase HII family. Mn(2+) is required as a cofactor. The cofactor is Mg(2+).

It is found in the cytoplasm. The catalysed reaction is Endonucleolytic cleavage to 5'-phosphomonoester.. Functionally, endonuclease that specifically degrades the RNA of RNA-DNA hybrids. The polypeptide is Ribonuclease HII (Natronomonas pharaonis (strain ATCC 35678 / DSM 2160 / CIP 103997 / JCM 8858 / NBRC 14720 / NCIMB 2260 / Gabara) (Halobacterium pharaonis)).